Consider the following 90-residue polypeptide: Probable acyl carrier protein (90 aa).

The Carrier domain maps to Gln9–Val90. Ser47 is subject to O-(pantetheine 4'-phosphoryl)serine.

4'-phosphopantetheine is transferred from CoA to a specific serine of the apo-ACP-like protein.

In terms of biological role, involved in developmentally regulated synthesis of a compound biosynthetically related to polyketide antibiotics which is essential for spore color in Streptomyces coelicolor. The chain is Probable acyl carrier protein from Streptomyces coelicolor (strain ATCC BAA-471 / A3(2) / M145).